An 86-amino-acid chain; its full sequence is Small ribosomal subunit protein bS18 (86 aa).

This sequence belongs to the bacterial ribosomal protein bS18 family. As to quaternary structure, part of the 30S ribosomal subunit. Forms a tight heterodimer with protein bS6.

Functionally, binds as a heterodimer with protein bS6 to the central domain of the 16S rRNA, where it helps stabilize the platform of the 30S subunit. The chain is Small ribosomal subunit protein bS18 from Campylobacter fetus subsp. fetus (strain 82-40).